The chain runs to 600 residues: Glutamine--fructose-6-phosphate aminotransferase [isomerizing] (600 aa).

Cys2 serves as the catalytic Nucleophile; for GATase activity. In terms of domain architecture, Glutamine amidotransferase type-2 spans 2–217 (CGIVGFIGEQ…DKEIVIVMKE (216 aa)). SIS domains follow at residues 283 to 422 (IRNA…AKGE) and 452 to 590 (LAKQ…VDKP). Catalysis depends on Lys595, which acts as the For Fru-6P isomerization activity.

In terms of assembly, homodimer.

It is found in the cytoplasm. It carries out the reaction D-fructose 6-phosphate + L-glutamine = D-glucosamine 6-phosphate + L-glutamate. Functionally, catalyzes the first step in hexosamine metabolism, converting fructose-6P into glucosamine-6P using glutamine as a nitrogen source. The polypeptide is Glutamine--fructose-6-phosphate aminotransferase [isomerizing] (Bacillus thuringiensis subsp. konkukian (strain 97-27)).